The following is a 177-amino-acid chain: Large ribosomal subunit protein bL17 (177 aa).

The tract at residues 136–177 (AEEEAPAVEAEATEAVEAPVEETAAAEAEAPAEEAADAEKAE) is disordered. Residues 138 to 149 (EEAPAVEAEATE) show a composition bias toward acidic residues. Positions 150–164 (AVEAPVEETAAAEAE) are enriched in low complexity.

Belongs to the bacterial ribosomal protein bL17 family. Part of the 50S ribosomal subunit. Contacts protein L32.

The sequence is that of Large ribosomal subunit protein bL17 from Bifidobacterium longum (strain NCC 2705).